The chain runs to 210 residues: Endonuclease III (210 aa).

The 20-residue stretch at 108–127 folds into the HhH domain; sequence RIELESLPGVGRKTANIILN. C187, C194, C197, and C203 together coordinate [4Fe-4S] cluster.

It belongs to the Nth/MutY family. It depends on [4Fe-4S] cluster as a cofactor.

The enzyme catalyses 2'-deoxyribonucleotide-(2'-deoxyribose 5'-phosphate)-2'-deoxyribonucleotide-DNA = a 3'-end 2'-deoxyribonucleotide-(2,3-dehydro-2,3-deoxyribose 5'-phosphate)-DNA + a 5'-end 5'-phospho-2'-deoxyribonucleoside-DNA + H(+). Its function is as follows. DNA repair enzyme that has both DNA N-glycosylase activity and AP-lyase activity. The DNA N-glycosylase activity releases various damaged pyrimidines from DNA by cleaving the N-glycosidic bond, leaving an AP (apurinic/apyrimidinic) site. The AP-lyase activity cleaves the phosphodiester bond 3' to the AP site by a beta-elimination, leaving a 3'-terminal unsaturated sugar and a product with a terminal 5'-phosphate. The sequence is that of Endonuclease III from Buchnera aphidicola subsp. Acyrthosiphon pisum (strain APS) (Acyrthosiphon pisum symbiotic bacterium).